The sequence spans 322 residues: Thioredoxin reductase (322 aa).

FAD is bound by residues 12 to 15 (SGPA), 34 to 42 (EGAVTAGGA), N51, and V84. C136 and C139 form a disulfide bridge. NADP(+) contacts are provided by H176, R182, I239, and Y259. Residues D279 and 286–289 (RQAI) contribute to the FAD site. Position 286 (R286) interacts with NADP(+).

This sequence belongs to the class-II pyridine nucleotide-disulfide oxidoreductase family. In terms of assembly, homodimer. The cofactor is FAD.

The protein localises to the cytoplasm. The catalysed reaction is [thioredoxin]-dithiol + NADP(+) = [thioredoxin]-disulfide + NADPH + H(+). In Streptomyces coelicolor (strain ATCC BAA-471 / A3(2) / M145), this protein is Thioredoxin reductase.